Here is a 334-residue protein sequence, read N- to C-terminus: MKETIAYLGMGMWGFSLANLLANNGHRVVGWARNPALIEQLSVQRRHPAAPHISIPQNLSFTYHMEEALDGATMIVEGVTSAGMRPVLTQLKALTELRVPLVITSKGIEQNTGLLLSEIALEIFGRPAAQHLGYLSGPSIASEVLRGCPCSVVISAYNPDTLKQIHRAFLTPTFRVYPNSDLKGVALGGALKNVIAIACGISDGFRFGDNAKSGLVTRGLHEIRKFATIMGCRPDTLNGLAGLGDLCTTCFSAFSRNTLFGKLLAEGLTPEQAKTKIGMVVEGVYTALSAHQIATHHRIDMPITTSVYRVLYENLDIQEGIAQLLQRDTKEEYL.

Residues Trp13, Arg33, and Lys106 each contribute to the NADPH site. 3 residues coordinate sn-glycerol 3-phosphate: Lys106, Gly137, and Ser139. Position 141 (Ala141) interacts with NADPH. Lys192, Asp245, Ser255, Arg256, and Asn257 together coordinate sn-glycerol 3-phosphate. The active-site Proton acceptor is the Lys192. Arg256 provides a ligand contact to NADPH. Residues Val280 and Glu282 each coordinate NADPH.

Belongs to the NAD-dependent glycerol-3-phosphate dehydrogenase family.

Its subcellular location is the cytoplasm. It catalyses the reaction sn-glycerol 3-phosphate + NAD(+) = dihydroxyacetone phosphate + NADH + H(+). The catalysed reaction is sn-glycerol 3-phosphate + NADP(+) = dihydroxyacetone phosphate + NADPH + H(+). Its pathway is membrane lipid metabolism; glycerophospholipid metabolism. Catalyzes the reduction of the glycolytic intermediate dihydroxyacetone phosphate (DHAP) to sn-glycerol 3-phosphate (G3P), the key precursor for phospholipid synthesis. The chain is Glycerol-3-phosphate dehydrogenase [NAD(P)+] from Chlamydia trachomatis serovar L2 (strain ATCC VR-902B / DSM 19102 / 434/Bu).